The chain runs to 779 residues: Glucan endo-1,3-beta-D-glucosidase 2 (779 aa).

The disordered stretch occupies residues 1-71 (MCYSRQAIPP…SNPLADSQVN (71 aa)). Positions 57–71 (RTPSSSNPLADSQVN) are enriched in polar residues. A beta-sandwich subdomain region spans residues 73 to 309 (DNIFQSPVLS…NGLICQLSAD (237 aa)). A GH81 domain is found at 73–779 (DNIFQSPVLS…WSLAYSGAFS (707 aa)). The alpha/beta subdomain stretch occupies residues 309-400 (DSVPSIDMAA…LTNSFDMQVQ (92 aa)). Residues 375-779 (IASSLDSTVK…WSLAYSGAFS (405 aa)) are sufficient for catalytic activity. The tract at residues 415–779 (NKKADYSQEK…WSLAYSGAFS (365 aa)) is (alpha/beta)6 barrel subdomain. Asp-526 is an active-site residue. (1,3-beta-D-glucosyl)n contacts are provided by His-530, Asp-607, Glu-609, and Glu-613. Residues Glu-609 and Glu-613 contribute to the active site. A may provide specificity for triple-helical beta-glucan region spans residues 678–680 (KID). Tyr-691 is a (1,3-beta-D-glucosyl)n binding site.

This sequence belongs to the glycosyl hydrolase 81 family.

Its subcellular location is the cytoplasm. The enzyme catalyses Hydrolysis of (1-&gt;3)-beta-D-glucosidic linkages in (1-&gt;3)-beta-D-glucans.. Inhibited by mercury ions. Its function is as follows. Cleaves internal linkages in 1,3-beta-glucan. This is Glucan endo-1,3-beta-D-glucosidase 2 from Saccharomyces cerevisiae (strain ATCC 204508 / S288c) (Baker's yeast).